Reading from the N-terminus, the 115-residue chain is Inner membrane protein YidH (115 aa).

Residues 1–30 are Cytoplasmic-facing; it reads MKISRLGEAPDYRFSLANERTFLAWIRTAL. A helical transmembrane segment spans residues 31 to 51; sequence GFLAAGVGLDQLAPDFATPVI. Topologically, residues 52 to 53 are periplasmic; that stretch reads RE. Residues 54–74 form a helical membrane-spanning segment; the sequence is LLALLLCLFSGGLAMYGYLRW. Residues 75 to 92 are Cytoplasmic-facing; that stretch reads LRNEKAMRLKEDLPYTNS. The helical transmembrane segment at 93–113 threads the bilayer; that stretch reads LLIISLILMVVAVIVMGLVLY. The Periplasmic segment spans residues 114–115; it reads AG.

To M.tuberculosis Rv2272.

It localises to the cell inner membrane. The polypeptide is Inner membrane protein YidH (yidH) (Escherichia coli O157:H7).